A 272-amino-acid chain; its full sequence is Glutamate racemase (272 aa).

Residues 13 to 14 (DS) and 45 to 46 (YG) each bind substrate. The active-site Proton donor/acceptor is the Cys76. A substrate-binding site is contributed by 77–78 (NT). The active-site Proton donor/acceptor is Cys187. Position 188 to 189 (188 to 189 (TH)) interacts with substrate.

Belongs to the aspartate/glutamate racemases family.

The enzyme catalyses L-glutamate = D-glutamate. It participates in cell wall biogenesis; peptidoglycan biosynthesis. Its function is as follows. Provides the (R)-glutamate required for cell wall biosynthesis. In Roseiflexus sp. (strain RS-1), this protein is Glutamate racemase.